We begin with the raw amino-acid sequence, 190 residues long: ATP synthase subunit b 1 (190 aa).

Residues 35-55 (DFVVLLGFLLFLAILFYFGVP) traverse the membrane as a helical segment.

Belongs to the ATPase B chain family. As to quaternary structure, F-type ATPases have 2 components, F(1) - the catalytic core - and F(0) - the membrane proton channel. F(1) has five subunits: alpha(3), beta(3), gamma(1), delta(1), epsilon(1). F(0) has three main subunits: a(1), b(2) and c(10-14). The alpha and beta chains form an alternating ring which encloses part of the gamma chain. F(1) is attached to F(0) by a central stalk formed by the gamma and epsilon chains, while a peripheral stalk is formed by the delta and b chains.

The protein localises to the cell inner membrane. Functionally, f(1)F(0) ATP synthase produces ATP from ADP in the presence of a proton or sodium gradient. F-type ATPases consist of two structural domains, F(1) containing the extramembraneous catalytic core and F(0) containing the membrane proton channel, linked together by a central stalk and a peripheral stalk. During catalysis, ATP synthesis in the catalytic domain of F(1) is coupled via a rotary mechanism of the central stalk subunits to proton translocation. In terms of biological role, component of the F(0) channel, it forms part of the peripheral stalk, linking F(1) to F(0). The protein is ATP synthase subunit b 1 of Jannaschia sp. (strain CCS1).